Here is a 122-residue protein sequence, read N- to C-terminus: Large ribosomal subunit protein uL14 (122 aa).

This sequence belongs to the universal ribosomal protein uL14 family. In terms of assembly, part of the 50S ribosomal subunit. Forms a cluster with proteins L3 and L19. In the 70S ribosome, L14 and L19 interact and together make contacts with the 16S rRNA in bridges B5 and B8.

Binds to 23S rRNA. Forms part of two intersubunit bridges in the 70S ribosome. The sequence is that of Large ribosomal subunit protein uL14 from Treponema denticola (strain ATCC 35405 / DSM 14222 / CIP 103919 / JCM 8153 / KCTC 15104).